A 491-amino-acid chain; its full sequence is Chondroitin proteoglycan 2 (491 aa).

A signal peptide spans Met-1–Gly-18. The 58-residue stretch at Leu-21–Gly-78 folds into the Chitin-binding type-2 1 domain. Cys-54 and Cys-67 are oxidised to a cystine. The segment at Gly-80–Asn-126 is disordered. Residues Ser-87–Gly-120 show a composition bias toward gly residues. The Chitin-binding type-2 2 domain maps to Asn-125–Gly-182. A disulfide bond links Cys-158 and Cys-171. Positions Asp-187 to Glu-217 are disordered. Residues Ser-197 and Ser-201 are each glycosylated (O-linked (Xyl...) (chondroitin sulfate) serine). The span at Ala-200 to Gly-210 shows a compositional bias: low complexity. Chitin-binding type-2 domains lie at Glu-217 to Gly-274, Ala-279 to Glu-334, Glu-367 to Ile-423, and Pro-436 to His-491. Cystine bridges form between Cys-250/Cys-263 and Cys-310/Cys-323. The segment at Ser-336–Glu-367 is disordered. A compositionally biased stretch (low complexity) spans Ala-356–Glu-367. Cysteines 399 and 412 form a disulfide. Asn-464 is a glycosylation site (N-linked (GlcNAc...) asparagine). A disulfide bridge connects residues Cys-467 and Cys-481.

In terms of biological role, required for polar body extrusion during cytokinesis in embryo development. Affects cortical granule size. Shown to have roles in meiotic chromosome segregation, osmotic barrier function and polarization in conjunction with cpg-2. Binds chitin. This Caenorhabditis briggsae protein is Chondroitin proteoglycan 2.